Reading from the N-terminus, the 94-residue chain is MAKEELIQFEGLVTEILPDARYRVQLDAGHEIVAYTAGKMKKNRIKTLAGDRVTIEMSPYDLEKGRLIFRHKDERPGGTGAPRGAPPRGQFRRR.

The region spanning methionine 1–lysine 72 is the S1-like domain. Residues histidine 71–arginine 94 form a disordered region. Residues proline 82–arginine 94 show a composition bias toward low complexity.

The protein belongs to the IF-1 family. In terms of assembly, component of the 30S ribosomal translation pre-initiation complex which assembles on the 30S ribosome in the order IF-2 and IF-3, IF-1 and N-formylmethionyl-tRNA(fMet); mRNA recruitment can occur at any time during PIC assembly.

It localises to the cytoplasm. One of the essential components for the initiation of protein synthesis. Stabilizes the binding of IF-2 and IF-3 on the 30S subunit to which N-formylmethionyl-tRNA(fMet) subsequently binds. Helps modulate mRNA selection, yielding the 30S pre-initiation complex (PIC). Upon addition of the 50S ribosomal subunit IF-1, IF-2 and IF-3 are released leaving the mature 70S translation initiation complex. The sequence is that of Translation initiation factor IF-1 from Rhodopseudomonas palustris (strain BisB5).